Consider the following 137-residue polypeptide: MSAHLQWMVVRNCSSFLIKRNKQTYSTEPNNLKARNSFRYNGLIHRKTVGVEPAADGKGVVVVMKRRSGQRKPATSYVRTTINKNARATLSSIRHMIRKNKYHPDLRMAAIRRASAILRSQKPVMVKRKRTRPTKSS.

The residue at position 2 (Ser2) is an N-acetylserine. Glycyl lysine isopeptide (Lys-Gly) (interchain with G-Cter in SUMO2) cross-links involve residues Lys58 and Lys65. Ser115 carries the phosphoserine modification.

The protein belongs to the eukaryotic ribosomal protein eL28 family. As to quaternary structure, component of the large ribosomal subunit.

It is found in the cytoplasm. Functionally, component of the large ribosomal subunit. The ribosome is a large ribonucleoprotein complex responsible for the synthesis of proteins in the cell. In Oryctolagus cuniculus (Rabbit), this protein is Large ribosomal subunit protein eL28 (RPL28).